The chain runs to 489 residues: Homoserine O-acetyltransferase (489 aa).

The region spanning 47–354 (NAILVCHALT…NYGHDSFLLE (308 aa)) is the AB hydrolase-1 domain. The active-site Nucleophile is the Ser152. A substrate-binding site is contributed by Arg221. Residues Asp315 and His348 contribute to the active site. Asp349 contacts substrate. CBS domains lie at 375–434 (MIED…NLEE) and 436–489 (MTKN…IEEF).

It belongs to the AB hydrolase superfamily. MetX family. As to quaternary structure, homodimer.

It is found in the cytoplasm. It carries out the reaction L-homoserine + acetyl-CoA = O-acetyl-L-homoserine + CoA. Its pathway is amino-acid biosynthesis; L-methionine biosynthesis via de novo pathway; O-acetyl-L-homoserine from L-homoserine: step 1/1. Its function is as follows. Transfers an acetyl group from acetyl-CoA to L-homoserine, forming acetyl-L-homoserine. This is Homoserine O-acetyltransferase from Methanohalobium evestigatum (strain ATCC BAA-1072 / DSM 3721 / NBRC 107634 / OCM 161 / Z-7303).